A 1533-amino-acid chain; its full sequence is DNA topoisomerase 2-alpha (1533 aa).

The residue at position 1 (methionine 1) is an N-acetylmethionine. Residues 1-22 (MEVSPLQPVNENMQVNKTKKNE) are disordered. Residue serine 4 is modified to Phosphoserine. Over residues 7 to 16 (QPVNENMQVN) the composition is skewed to polar residues. Residue lysine 17 forms a Glycyl lysine isopeptide (Lys-Gly) (interchain with G-Cter in SUMO2) linkage. ATP is bound by residues asparagine 91, asparagine 120, and 148–150 (SSN). Residues lysine 156 and lysine 157 each participate in a glycyl lysine isopeptide (Lys-Gly) (interchain with G-Cter in SUMO2) cross-link. 161 to 168 (GRNGYGAK) serves as a coordination point for ATP. A Glycyl lysine isopeptide (Lys-Gly) (interchain with G-Cter in SUMO2) cross-link involves residue lysine 261. At threonine 282 the chain carries Phosphothreonine. The interaction with DNA stretch occupies residues 342–344 (KKK). Lysine 352 participates in a covalent cross-link: Glycyl lysine isopeptide (Lys-Gly) (interchain with G-Cter in SUMO2). 376 to 378 (QTK) is a binding site for ATP. Glycyl lysine isopeptide (Lys-Gly) (interchain with G-Cter in SUMO2) cross-links involve residues lysine 386, lysine 397, lysine 416, lysine 418, lysine 425, and lysine 440. The region spanning 455–572 (CTLILTEGDS…SLLRHRFLEE (118 aa)) is the Toprim domain. Glutamate 461 contacts Mg(2+). Residues lysine 466, lysine 480, and lysine 529 each participate in a glycyl lysine isopeptide (Lys-Gly) (interchain with G-Cter in SUMO2) cross-link. Residues aspartate 541 and aspartate 543 each coordinate Mg(2+). Residues lysine 584, lysine 599, lysine 614, lysine 622, lysine 625, lysine 632, lysine 639, lysine 655, lysine 662, and lysine 676 each participate in a glycyl lysine isopeptide (Lys-Gly) (interchain with G-Cter in SUMO2) cross-link. One can recognise a Topo IIA-type catalytic domain in the interval 715–1171 (IPSMVDGLKP…SPSDLWKEDL (457 aa)). Tyrosine 805 acts as the O-(5'-phospho-DNA)-tyrosine intermediate in catalysis. The interaction with DNA stretch occupies residues 990-999 (KLQTSLTCNS). Lysine 1075 is covalently cross-linked (Glycyl lysine isopeptide (Lys-Gly) (interchain with G-Cter in SUMO2)). Disordered regions lie at residues 1090–1121 (WKEA…VADS) and 1183–1215 (AKEK…PSPC). The span at 1099–1108 (DEEENEESDN) shows a compositional bias: acidic residues. Serine 1106 is modified (phosphoserine; by CK1). Residues lysine 1114, lysine 1196, and lysine 1204 each participate in a glycyl lysine isopeptide (Lys-Gly) (interchain with G-Cter in SUMO2) cross-link. At threonine 1205 the chain carries Phosphothreonine. Serine 1213 carries the phosphoserine modification. Residue lysine 1228 forms a Glycyl lysine isopeptide (Lys-Gly) (interchain with G-Cter in SUMO2) linkage. Residues 1231–1533 (AEKKIKKKIK…LEESDEDDLF (303 aa)) form a disordered region. Residue lysine 1240 forms a Glycyl lysine isopeptide (Lys-Gly) (interchain with G-Cter in SUMO1); alternate linkage. Residue lysine 1240 forms a Glycyl lysine isopeptide (Lys-Gly) (interchain with G-Cter in SUMO2); alternate linkage. Position 1244 is a phosphothreonine (threonine 1244). The residue at position 1247 (serine 1247) is a Phosphoserine. The segment covering 1256–1272 (EGLKQRLEKKQKREPGT) has biased composition (basic and acidic residues). Residues lysine 1259, lysine 1276, lysine 1283, and lysine 1286 each participate in a glycyl lysine isopeptide (Lys-Gly) (interchain with G-Cter in SUMO2) cross-link. A phosphoserine mark is found at serine 1295, serine 1297, serine 1299, and serine 1302. Threonine 1327 carries the post-translational modification Phosphothreonine. A phosphoserine mark is found at serine 1332 and serine 1337. A Phosphothreonine modification is found at threonine 1343. Serine 1351 and serine 1354 each carry phosphoserine. A compositionally biased stretch (basic and acidic residues) spans 1360-1371 (TSPKHTNKEPKP). Residues lysine 1363, lysine 1367, and lysine 1373 each participate in a glycyl lysine isopeptide (Lys-Gly) (interchain with G-Cter in SUMO2) cross-link. Phosphoserine is present on residues serine 1374 and serine 1377. Lysine 1387 is covalently cross-linked (Glycyl lysine isopeptide (Lys-Gly) (interchain with G-Cter in SUMO2)). 2 positions are modified to phosphoserine: serine 1393 and serine 1395. Over residues 1409–1433 (KPVSKKNVTVKKTAAKSQSSTSTTG) the composition is skewed to low complexity. Residue lysine 1424 forms a Glycyl lysine isopeptide (Lys-Gly) (interchain with G-Cter in SUMO2); alternate linkage. Lysine 1424 bears the N6-acetyllysine; alternate mark. Residues 1435 to 1441 (KKRAAPK) are interaction with PLSCR1. Over residues 1443-1455 (AKKDPDLDSDVSK) the composition is skewed to basic and acidic residues. Residue lysine 1444 forms a Glycyl lysine isopeptide (Lys-Gly) (interchain with G-Cter in SUMO2); alternate linkage. Position 1444 is an N6-acetyllysine; alternate (lysine 1444). At serine 1451 the chain carries Phosphoserine. Glycyl lysine isopeptide (Lys-Gly) (interchain with G-Cter in SUMO2) cross-links involve residues lysine 1456 and lysine 1461. Serine 1471 carries the post-translational modification Phosphoserine. The residue at position 1472 (threonine 1472) is a Phosphothreonine. Serine 1473, serine 1476, and serine 1478 each carry phosphoserine. Glycyl lysine isopeptide (Lys-Gly) (interchain with G-Cter in SUMO2) cross-links involve residues lysine 1486 and lysine 1494. Over residues 1493-1504 (PKGESDDFHLDL) the composition is skewed to basic and acidic residues. Phosphoserine occurs at positions 1497 and 1527.

This sequence belongs to the type II topoisomerase family. Homodimer. Interacts with COPS5. Interacts with RECQL5; this stimulates DNA decatenation. Interacts with SETMAR; stimulates the topoisomerase activity. Interacts with DHX9; this interaction occurs in a E2 enzyme UBE2I- and RNA-dependent manner, negatively regulates DHX9-mediated double-stranded DNA and RNA duplex helicase activity and stimulates TOP2A-mediated supercoiled DNA relaxation activity. Interacts with HNRNPU (via C-terminus); this interaction protects the topoisomerase TOP2A from degradation and positively regulates the relaxation of supercoiled DNA in a RNA-dependent manner. Interacts with MCM3AP. Interacts with ERCC6. Interacts with PLSCR1. Interacts with GCNA; this interaction allows the resolution of topoisomerase II (TOP2A) DNA-protein cross-links. Interacts with POL1RA/RPA1 (via dock II) and UBTF in the context of Pol I complex; may assist Pol I transcription initiation by releasing supercoils occurring during DNA unwinding. Interacts with TPRN; TPRN interacts with a number of DNA damage response proteins, is recruited to sites of DNA damage and may play a role in DNA damage repair. The cofactor is Mg(2+). Requires Mn(2+) as cofactor. It depends on Ca(2+) as a cofactor. In terms of processing, phosphorylation has no effect on catalytic activity. However, phosphorylation at Ser-1106 by CSNK1D/CK1 promotes DNA cleavable complex formation.

It is found in the cytoplasm. The protein resides in the nucleus. It localises to the nucleoplasm. Its subcellular location is the nucleolus. It carries out the reaction ATP-dependent breakage, passage and rejoining of double-stranded DNA.. Functionally, key decatenating enzyme that alters DNA topology by binding to two double-stranded DNA molecules, generating a double-stranded break in one of the strands, passing the intact strand through the broken strand, and religating the broken strand. May play a role in regulating the period length of BMAL1 transcriptional oscillation. This Sus scrofa (Pig) protein is DNA topoisomerase 2-alpha (TOP2A).